A 445-amino-acid polypeptide reads, in one-letter code: Adenine permease AdeP (445 aa).

Residues 1–28 (MSHQHTTQTSGQGMLERVFKLREHGTTA) lie on the Cytoplasmic side of the membrane. A helical membrane pass occupies residues 29–52 (RTEVIAGFTTFLTMVYIVFVNPQI). Topologically, residues 53–62 (LGVAGMDTSA) are periplasmic. A helical transmembrane segment spans residues 63–81 (VFVTTCLIAAFGSIMMGLF). The Cytoplasmic portion of the chain corresponds to 82-83 (AN). The chain crosses the membrane as a discontinuously helical span at residues 84–100 (LPVALAPAMGLNAFFAF). Topologically, residues 101–112 (VVVQAMGLPWQV) are periplasmic. A helical membrane pass occupies residues 113–132 (GMGAIFWGAIGLLLLTIFRV). Residues 133–144 (RYWMIANIPVSL) lie on the Cytoplasmic side of the membrane. The helical transmembrane segment at 145–165 (RVGITSGIGLFIGMMGLKNAG) threads the bilayer. The Periplasmic portion of the chain corresponds to 166–181 (VIVANPETLVSIGNLT). The helical transmembrane segment at 182 to 199 (SHSVLLGILGFFIIAILA) threads the bilayer. The Cytoplasmic segment spans residues 200-203 (SRNI). A helical membrane pass occupies residues 204–222 (HAAVLVSIVVTTLLGWMLG). Residues 223-250 (DVHYNGIVSAPPSVMTVVGHVDLAGSFN) are Periplasmic-facing. Residues 251–279 (LGLAGVIFSFMLVNLFDSSGTLIGVTDKA) traverse the membrane as a helical segment. The Cytoplasmic segment spans residues 280–292 (GLADEKGKFPRMK). The chain crosses the membrane as a helical span at residues 293–308 (QALYVDSISSVTGSFI). The Periplasmic segment spans residues 309 to 310 (GT). A discontinuously helical transmembrane segment spans residues 311–326 (SSVTAYIESSSGVSVG). At 327–330 (GRTG) the chain is on the cytoplasmic side. Residues 331–345 (LTAVVVGLLFLLVIF) form a helical membrane-spanning segment. Over 346-356 (LSPLAGMVPGY) the chain is Periplasmic. A helical membrane pass occupies residues 357-376 (AAAGALIYVGVLMTSSLARV). Topologically, residues 377-381 (NWQDL) are cytoplasmic. The segment at residues 382–417 (TESVPAFITAVMMPFSFSITEGIALGFISYCVMKIG) is an intramembrane region (discontinuously helical). At 418–445 (TGRLRDLSPCVIIVALLFILKIVFIDAH) the chain is on the cytoplasmic side.

It belongs to the nucleobase:cation symporter-2 (NCS2) (TC 2.A.40) family. Azg-like subfamily.

The protein resides in the cell inner membrane. Its activity is regulated as follows. Internal adenine may inhibit transport. In terms of biological role, high-affinity transporter for adenine. The protein is Adenine permease AdeP (adeP) of Escherichia coli (strain K12).